The primary structure comprises 410 residues: Cytochrome P450(MEG) (410 aa).

Residue Cys-355 coordinates heme.

This sequence belongs to the cytochrome P450 family. Requires heme as cofactor.

Its subcellular location is the cytoplasm. It catalyses the reaction reduced 2[4Fe-4S]-[ferredoxin] + progesterone + O2 + 2 H(+) = 15beta-hydroxyprogesterone + oxidized 2[4Fe-4S]-[ferredoxin] + H2O. Functionally, has the capacity to hydroxylate certain steroids in the 15-beta position. Also hydroxylates progesterone in the 11-alpha and 9-beta position. The protein is Cytochrome P450(MEG) (cyp106A2) of Priestia megaterium (Bacillus megaterium).